The sequence spans 375 residues: Sulfite efflux pump SSU1 (375 aa).

The Cytoplasmic portion of the chain corresponds to 1–25; the sequence is MPSGSGFHNIEEAGEKARKRDDWIA. The helical transmembrane segment at 26 to 46 threads the bilayer; that stretch reads ISNFHPGWFSVNMGTGITAIL. Topologically, residues 47–59 are extracellular; the sequence is LQNLPYQFPGLHY. Residues 60–80 traverse the membrane as a helical segment; it reads IAVILFILNVIIFFLFLTISI. The Cytoplasmic segment spans residues 81–101; it reads TRYCLWPDKFKAMLAHPAHSM. A helical transmembrane segment spans residues 102–122; sequence LLGTFPMGFATIINCIVFICV. The Extracellular portion of the chain corresponds to 123 to 135; it reads PVWGEWASRFAWG. Residues 136-156 form a helical membrane-spanning segment; sequence LWWIDAAVSVAICYFVPFMLM. Residues 157-167 are Cytoplasmic-facing; the sequence is TKHTSSLETMT. A helical transmembrane segment spans residues 168-188; it reads AAWLLPIVAPVVAAASGGVVA. The Extracellular portion of the chain corresponds to 189–200; sequence DSLQNDTHALIT. Asn-193 carries N-linked (GlcNAc...) asparagine glycosylation. A helical membrane pass occupies residues 201-221; that stretch reads ILVCYVMWGSAVPLAMVILVI. Residues 222–234 are Cytoplasmic-facing; the sequence is YFQRLAIHKLVPR. Residues 235–255 form a helical membrane-spanning segment; sequence AAIVSALLPIGPLGQGGFGLM. At 256–277 the chain is on the extracellular side; sequence QLGVVAKRVFPRLDFLAPIAGD. The helical transmembrane segment at 278–298 threads the bilayer; it reads IFYVMGAFIAMIMWGFGLIWL. Over 299 to 309 the chain is Cytoplasmic; that stretch reads WFALASFTRGK. A helical transmembrane segment spans residues 310–330; that stretch reads FYFNIGWWAFTFPLGVFTTAT. Residues 331 to 343 lie on the Extracellular side of the membrane; sequence TQMGKEFNSPFFD. The helical transmembrane segment at 344–364 threads the bilayer; it reads ILGTFFSIVVTCMWVLVFALT. Residues 365–375 are Cytoplasmic-facing; that stretch reads VYKSCTKELFR.

It belongs to the tellurite-resistance/dicarboxylate transporter (TDT) family.

It localises to the cell membrane. In terms of biological role, sulphite efflux pump required for the secretion of sulphite as a reducing agent. In the presence of sulphite, cystine in keratin is directly cleaved to cysteine and S-sulphocysteine, and thereby, reduced proteins become accessible to hydrolysis by a variety of secreted endo- and exoproteases. Excretion of sulphite mediated by an efflux pump also represents a detoxification pathway for dermatophytes during infection of the epidermal stratum corneum, hair and nails, which are rich in cysteine. This chain is Sulfite efflux pump SSU1, found in Arthroderma benhamiae (strain ATCC MYA-4681 / CBS 112371) (Trichophyton mentagrophytes).